An 887-amino-acid polypeptide reads, in one-letter code: Chaperone protein ClpB 2 (887 aa).

Residues 6–147 (PTKFTDKAWE…AATVKAIRGA (142 aa)) form the Clp R domain. Repeat stretches follow at residues 9–73 (FTDK…ARQQ) and 84–147 (CGRS…IRGA). Residues 160–342 (AALEKYGRDL…RRFQQVYIGQ (183 aa)) are NBD1. 207-214 (GEPGVGKT) lines the ATP pocket. Positions 343 to 559 (PSVEDTISIL…IAEIVAKWTG (217 aa)) are linker. A coiled-coil region spans residues 393-535 (IDLVDEAAAK…TEAQLLELQA (143 aa)). The interval 569 to 780 (ERQKLLQLEQ…RIDDVILFHG (212 aa)) is NBD2. ATP is bound at residue 619–626 (GPTGVGKT). A C-terminal region spans residues 781–887 (LGRTELAQIA…TGDRDTVSAS (107 aa)).

It belongs to the ClpA/ClpB family. Homohexamer. The oligomerization is ATP-dependent.

It is found in the cytoplasm. Part of a stress-induced multi-chaperone system, it is involved in the recovery of the cell from heat-induced damage, in cooperation with DnaK, DnaJ and GrpE. Acts before DnaK, in the processing of protein aggregates. Protein binding stimulates the ATPase activity; ATP hydrolysis unfolds the denatured protein aggregates, which probably helps expose new hydrophobic binding sites on the surface of ClpB-bound aggregates, contributing to the solubilization and refolding of denatured protein aggregates by DnaK. This is Chaperone protein ClpB 2 (clpB2) from Thermosynechococcus vestitus (strain NIES-2133 / IAM M-273 / BP-1).